We begin with the raw amino-acid sequence, 346 residues long: Small ribosomal subunit biogenesis GTPase RsgA (346 aa).

Positions 1–26 (MAKRKLTQNQTRRIQSNNAKTLHRHK) are disordered. The span at 7–20 (TQNQTRRIQSNNAK) shows a compositional bias: polar residues. The CP-type G domain occupies 103–271 (ENEISRPDYY…LIDSPGIREF (169 aa)). GTP is bound by residues 159–162 (NKVD) and 213–221 (GQSGVGKSS). Zn(2+) is bound by residues Cys-295, Cys-300, His-302, and Cys-308.

Belongs to the TRAFAC class YlqF/YawG GTPase family. RsgA subfamily. As to quaternary structure, monomer. Associates with 30S ribosomal subunit, binds 16S rRNA. It depends on Zn(2+) as a cofactor.

It is found in the cytoplasm. Its function is as follows. One of several proteins that assist in the late maturation steps of the functional core of the 30S ribosomal subunit. Helps release RbfA from mature subunits. May play a role in the assembly of ribosomal proteins into the subunit. Circularly permuted GTPase that catalyzes slow GTP hydrolysis, GTPase activity is stimulated by the 30S ribosomal subunit. The polypeptide is Small ribosomal subunit biogenesis GTPase RsgA (Haemophilus influenzae (strain 86-028NP)).